Reading from the N-terminus, the 109-residue chain is Nucleoid-associated protein Ping_2276 (109 aa).

The protein belongs to the YbaB/EbfC family. In terms of assembly, homodimer.

It is found in the cytoplasm. The protein localises to the nucleoid. Functionally, binds to DNA and alters its conformation. May be involved in regulation of gene expression, nucleoid organization and DNA protection. The polypeptide is Nucleoid-associated protein Ping_2276 (Psychromonas ingrahamii (strain DSM 17664 / CCUG 51855 / 37)).